The primary structure comprises 511 residues: MDFQLKTLTVARAAAEKSDVLIVLVGSAPLTAKDPLSALIASARKAGDLPDKAGKLLALYHPDEVVASRVVLAAIGDGKPASVRSGVIAAVNAAKAYGPKRVVMAFAQEADGAAVGSAVAAAADASYVYTTTKAKTSNGENGRTIRHLTLGVADAAAVGTAFDEARATVAGIELAKEWGNRPGNYCTPTLLAEAAKELGKLPRVKCEVLGPKEVQKLGMGSFAAVAQGSAEPLRFIVLRYQGGPKDQAPVVLVGKGITFDTGGVSLKPAAEMDEMKFDMCGAASVLGTFRALGEIQPAINVVGLVPSCENMNDGRAIKPGDVVTSMSGQTIEVLNTDAEGRLILCDALTYAKRFEPAAVIDIATLTGACVVALGGVRSGLFTSDDSLAEALQAAGEQSQDRCWRLPLDDEYAEGLKSNFADVANVAGRAGGAITAAKFLQRFAGDFTWAHLDIAGTAWKSGAAKGSTGRPVGLLVSYLMERARSGAAQAVSPKKAARKEPGAAARKARSAQ.

Mn(2+) is bound by residues K255 and D260. The active site involves K267. The Mn(2+) site is built by D278, D337, and E339. Residue R341 is part of the active site. Residues 485-511 (GAAQAVSPKKAARKEPGAAARKARSAQ) form a disordered region.

This sequence belongs to the peptidase M17 family. The cofactor is Mn(2+).

Its subcellular location is the cytoplasm. It catalyses the reaction Release of an N-terminal amino acid, Xaa-|-Yaa-, in which Xaa is preferably Leu, but may be other amino acids including Pro although not Arg or Lys, and Yaa may be Pro. Amino acid amides and methyl esters are also readily hydrolyzed, but rates on arylamides are exceedingly low.. The catalysed reaction is Release of an N-terminal amino acid, preferentially leucine, but not glutamic or aspartic acids.. Functionally, presumably involved in the processing and regular turnover of intracellular proteins. Catalyzes the removal of unsubstituted N-terminal amino acids from various peptides. The sequence is that of Probable cytosol aminopeptidase from Variovorax paradoxus (strain S110).